Reading from the N-terminus, the 291-residue chain is Probable cell wall amidase LytH (291 aa).

The first 40 residues, 1–40 (MKKIDSWLTKHGLKNRLTLVVIVIFIIFLILLFMFVNLSD), serve as a signal peptide directing secretion. The SH3b domain occupies 41–105 (EDTGQITITE…WVAGWHTNLN (65 aa)). Residues 122–286 (IVLDPGHGGS…VEQAIVDGLK (165 aa)) form the MurNAc-LAA domain. A disordered region spans residues 123–147 (VLDPGHGGSDQGASSSTPSKSLEKN). Over residues 133–142 (QGASSSTPSK) the composition is skewed to polar residues.

Belongs to the N-acetylmuramoyl-L-alanine amidase 3 family.

It is found in the secreted. Functionally, probably involved in cell-wall metabolism. This is Probable cell wall amidase LytH (lytH) from Staphylococcus epidermidis (strain ATCC 35984 / DSM 28319 / BCRC 17069 / CCUG 31568 / BM 3577 / RP62A).